Reading from the N-terminus, the 272-residue chain is PHD finger protein ALFIN-LIKE 6 (272 aa).

Over residues 1–23 (MEGGGGGGGGGGGGGGGGGGGGA) the composition is skewed to gly residues. 2 disordered regions span residues 1–24 (MEGG…GGAP) and 162–218 (QAKE…DNTL). The segment covering 168–182 (PNSSSKSNKPSSKVQ) has biased composition (low complexity). Residues 183 to 200 (SKAESRSKSKLSAPKDEE) show a composition bias toward basic and acidic residues. Acidic residues predominate over residues 201 to 214 (GSGDDEGEEEEDDH). A PHD-type zinc finger spans residues 216 to 268 (NTLCGTCGTNDGKDEFWICCDNCEKWYHGKCVKITPARAEHIKQYKCPDCTNK).

It belongs to the Alfin family.

The protein resides in the nucleus. Functionally, histone-binding component that specifically recognizes H3 tails trimethylated on 'Lys-4' (H3K4me3), which mark transcription start sites of virtually all active genes. This is PHD finger protein ALFIN-LIKE 6 from Oryza sativa subsp. japonica (Rice).